Here is a 401-residue protein sequence, read N- to C-terminus: Elongation factor Tu 2 (401 aa).

The 200-residue stretch at 10-209 (KPHVNVGTIG…AVDEYIPTPV (200 aa)) folds into the tr-type G domain. Residues 19-26 (GHVDHGKT) form a G1 region. 19 to 26 (GHVDHGKT) provides a ligand contact to GTP. T26 is a Mg(2+) binding site. Residues 60-64 (GITIA) form a G2 region. Positions 81 to 84 (DCPG) are G3. GTP-binding positions include 81-85 (DCPGH) and 136-139 (NKVD). A G4 region spans residues 136-139 (NKVD). The interval 174–176 (SAL) is G5.

It belongs to the TRAFAC class translation factor GTPase superfamily. Classic translation factor GTPase family. EF-Tu/EF-1A subfamily. As to quaternary structure, monomer.

It localises to the cytoplasm. It carries out the reaction GTP + H2O = GDP + phosphate + H(+). Functionally, GTP hydrolase that promotes the GTP-dependent binding of aminoacyl-tRNA to the A-site of ribosomes during protein biosynthesis. In Roseiflexus sp. (strain RS-1), this protein is Elongation factor Tu 2.